Consider the following 316-residue polypeptide: 4-hydroxy-3-methylbut-2-enyl diphosphate reductase (316 aa).

[4Fe-4S] cluster is bound at residue Cys-12. Positions 41 and 74 each coordinate (2E)-4-hydroxy-3-methylbut-2-enyl diphosphate. His-41 and His-74 together coordinate dimethylallyl diphosphate. Isopentenyl diphosphate contacts are provided by His-41 and His-74. Cys-96 provides a ligand contact to [4Fe-4S] cluster. His-124 is a binding site for (2E)-4-hydroxy-3-methylbut-2-enyl diphosphate. His-124 lines the dimethylallyl diphosphate pocket. His-124 is a binding site for isopentenyl diphosphate. The Proton donor role is filled by Glu-126. Thr-167 contacts (2E)-4-hydroxy-3-methylbut-2-enyl diphosphate. Cys-197 is a binding site for [4Fe-4S] cluster. Ser-225, Ser-226, Asn-227, and Ser-269 together coordinate (2E)-4-hydroxy-3-methylbut-2-enyl diphosphate. Positions 225, 226, 227, and 269 each coordinate dimethylallyl diphosphate. Positions 225, 226, 227, and 269 each coordinate isopentenyl diphosphate.

The protein belongs to the IspH family. Homodimer. [4Fe-4S] cluster serves as cofactor.

The catalysed reaction is isopentenyl diphosphate + 2 oxidized [2Fe-2S]-[ferredoxin] + H2O = (2E)-4-hydroxy-3-methylbut-2-enyl diphosphate + 2 reduced [2Fe-2S]-[ferredoxin] + 2 H(+). The enzyme catalyses dimethylallyl diphosphate + 2 oxidized [2Fe-2S]-[ferredoxin] + H2O = (2E)-4-hydroxy-3-methylbut-2-enyl diphosphate + 2 reduced [2Fe-2S]-[ferredoxin] + 2 H(+). Its pathway is isoprenoid biosynthesis; dimethylallyl diphosphate biosynthesis; dimethylallyl diphosphate from (2E)-4-hydroxy-3-methylbutenyl diphosphate: step 1/1. It functions in the pathway isoprenoid biosynthesis; isopentenyl diphosphate biosynthesis via DXP pathway; isopentenyl diphosphate from 1-deoxy-D-xylulose 5-phosphate: step 6/6. Its function is as follows. Catalyzes the conversion of 1-hydroxy-2-methyl-2-(E)-butenyl 4-diphosphate (HMBPP) into a mixture of isopentenyl diphosphate (IPP) and dimethylallyl diphosphate (DMAPP). Acts in the terminal step of the DOXP/MEP pathway for isoprenoid precursor biosynthesis. The protein is 4-hydroxy-3-methylbut-2-enyl diphosphate reductase of Shigella flexneri serotype 5b (strain 8401).